We begin with the raw amino-acid sequence, 139 residues long: Chemical-damaging agent resistance protein B (139 aa).

This sequence belongs to the CAPAB/TerDEXZ family.

In terms of biological role, not known; could confer methyl methane sulfonate (MMS), mitomycin C (MC), and UV resistance. This is Chemical-damaging agent resistance protein B from Clostridium acetobutylicum.